The chain runs to 199 residues: Small ribosomal subunit protein uS4B (199 aa).

One can recognise an S4 RNA-binding domain in the interval 88–151; that stretch reads CRLDNLVYRT…RKNKIFIDNF (64 aa).

It belongs to the universal ribosomal protein uS4 family. As to quaternary structure, part of the 30S ribosomal subunit. Contacts protein S5. The interaction surface between S4 and S5 is involved in control of translational fidelity.

One of the primary rRNA binding proteins, it binds directly to 16S rRNA where it nucleates assembly of the body of the 30S subunit. Its function is as follows. With S5 and S12 plays an important role in translational accuracy. This chain is Small ribosomal subunit protein uS4B, found in Alkaliphilus metalliredigens (strain QYMF).